The chain runs to 143 residues: Nucleoside diphosphate kinase 2 (143 aa).

ATP-binding residues include K11, F59, R87, T93, R104, and N114. The active-site Pros-phosphohistidine intermediate is H117.

The protein belongs to the NDK family. Homotetramer. Requires Mg(2+) as cofactor.

Its subcellular location is the cytoplasm. It catalyses the reaction a 2'-deoxyribonucleoside 5'-diphosphate + ATP = a 2'-deoxyribonucleoside 5'-triphosphate + ADP. The catalysed reaction is a ribonucleoside 5'-diphosphate + ATP = a ribonucleoside 5'-triphosphate + ADP. Functionally, major role in the synthesis of nucleoside triphosphates other than ATP. The ATP gamma phosphate is transferred to the NDP beta phosphate via a ping-pong mechanism, using a phosphorylated active-site intermediate. This Protochlamydia amoebophila (strain UWE25) protein is Nucleoside diphosphate kinase 2.